A 447-amino-acid polypeptide reads, in one-letter code: Phosphoglucosamine mutase (447 aa).

The active-site Phosphoserine intermediate is serine 102. Mg(2+) contacts are provided by serine 102, aspartate 241, aspartate 243, and aspartate 245. Serine 102 bears the Phosphoserine mark.

This sequence belongs to the phosphohexose mutase family. The cofactor is Mg(2+). In terms of processing, activated by phosphorylation.

It carries out the reaction alpha-D-glucosamine 1-phosphate = D-glucosamine 6-phosphate. Functionally, catalyzes the conversion of glucosamine-6-phosphate to glucosamine-1-phosphate. This is Phosphoglucosamine mutase from Pseudomonas syringae pv. syringae (strain B728a).